A 112-amino-acid chain; its full sequence is ATP synthase epsilon chain (112 aa).

Belongs to the ATPase epsilon chain family. In terms of assembly, F-type ATPases have 2 components, CF(1) - the catalytic core - and CF(0) - the membrane proton channel. CF(1) has five subunits: alpha(3), beta(3), gamma(1), delta(1), epsilon(1). CF(0) has three main subunits: a, b and c.

The protein resides in the cell inner membrane. Its function is as follows. Produces ATP from ADP in the presence of a proton gradient across the membrane. The chain is ATP synthase epsilon chain (atpC) from Rickettsia conorii (strain ATCC VR-613 / Malish 7).